Consider the following 21-residue polypeptide: Phospholipase A2 crotoxin basic chain (21 aa).

This sequence belongs to the phospholipase A2 family. Group II subfamily. It depends on Ca(2+) as a cofactor. Expressed by the venom gland.

Its subcellular location is the secreted. It catalyses the reaction a 1,2-diacyl-sn-glycero-3-phosphocholine + H2O = a 1-acyl-sn-glycero-3-phosphocholine + a fatty acid + H(+). Its function is as follows. Snake venom phospholipase A2 (PLA2) that induces a conspicuous local myotoxic effect and moderate footpad edema. In vitro, it shows anticoagulant effects and is not cytotoxic on myoblast but is able to lyse myotubes. PLA2 catalyzes the calcium-dependent hydrolysis of the 2-acyl groups in 3-sn-phosphoglycerides. This chain is Phospholipase A2 crotoxin basic chain, found in Crotalus durissus cumanensis (South American rattlesnake).